The sequence spans 346 residues: Probable 3-hydroxyacyl-CoA dehydrogenase (346 aa).

The disordered stretch occupies residues 322–346 (RANLSPSATPCTPWKARKATSCAPP).

This sequence belongs to the 3-hydroxyacyl-CoA dehydrogenase family.

The catalysed reaction is a (3S)-3-hydroxyacyl-CoA + NAD(+) = a 3-oxoacyl-CoA + NADH + H(+). The chain is Probable 3-hydroxyacyl-CoA dehydrogenase from Deinococcus radiodurans (strain ATCC 13939 / DSM 20539 / JCM 16871 / CCUG 27074 / LMG 4051 / NBRC 15346 / NCIMB 9279 / VKM B-1422 / R1).